A 335-amino-acid polypeptide reads, in one-letter code: Legumin type B (335 aa).

Disordered regions lie at residues Pro47–Val87 and Thr102–Gly155. Residues Asp105 to Asn118 are compositionally biased toward basic and acidic residues. Over residues Gln135–Glu144 the composition is skewed to acidic residues. The Cupin type-1 domain maps to Glu167 to Thr314.

The protein belongs to the 11S seed storage protein (globulins) family. Hexamer; each subunit is composed of an acidic and a basic chain derived from a single precursor and linked by a disulfide bond.

Functionally, this protein found in the seeds of many leguminous and non-leguminous plants is the source of sulfur-containing amino acids in seed meals. The chain is Legumin type B (LEB2) from Vicia faba (Broad bean).